The following is a 548-amino-acid chain: MTRYIFVTGGVVSSLGKGIASASLAAILEARGLKVTILKLDPYINVDPGTMSPFQHGEVFVTEDGAETDLDLGHYERFIRTKMTQGNNFTTGRVYEHVLRKERRGDYLGGTVQVIPHITDEIKRRVYEGGDGFDVALVEIGGTVGDIESLPFLEATRQIRSEKGANQAIFMHLTLVPYIKTAGETKTKPTQHSVKELRSIGIQPDILICRSEVELEESERRKIALFTNVEERAVVPLQDADTIYRIPLMLHEHGLDDIICDKLRIEADEVDLAEWVRVLDAKLNPLKSVNIAMVGKYMELLDAYKSLNEALIHAGIQGRVKVNIDYIDSEDIEHHGTERLAGKDAILVPGGFGERGVEGKIATARYARENGVPYLGICLGMQVAVIEYARHVAGWADANSTEFTHDTQHPVVGLITEWVNAEGKIELRDAASDLGGTMRLGGQVCHLKPGTRAHEAYGLDEITERHRHRFEVNNQFVEALESAGLVISGKSADHSLVEMIELPEHPWYVACQFHPEFTSTPRDGHPLFSGFVNAALAYKAARARAQQS.

Residues 1–265 form an amidoligase domain region; sequence MTRYIFVTGG…DDIICDKLRI (265 aa). Residue S13 coordinates CTP. S13 serves as a coordination point for UTP. Residues 14–19 and D71 each bind ATP; that span reads SLGKGI. Residues D71 and E139 each coordinate Mg(2+). Residues 146 to 148, 186 to 191, and K222 each bind CTP; these read DIE and KTKPTQ. Residues 186–191 and K222 each bind UTP; that span reads KTKPTQ. One can recognise a Glutamine amidotransferase type-1 domain in the interval 290 to 541; sequence NIAMVGKYME…VNAALAYKAA (252 aa). L-glutamine is bound at residue G351. The Nucleophile; for glutamine hydrolysis role is filled by C378. Residues 379–382, E402, and R469 each bind L-glutamine; that span reads LGMQ. Catalysis depends on residues H514 and E516.

It belongs to the CTP synthase family. As to quaternary structure, homotetramer.

It carries out the reaction UTP + L-glutamine + ATP + H2O = CTP + L-glutamate + ADP + phosphate + 2 H(+). The enzyme catalyses L-glutamine + H2O = L-glutamate + NH4(+). It catalyses the reaction UTP + NH4(+) + ATP = CTP + ADP + phosphate + 2 H(+). Its pathway is pyrimidine metabolism; CTP biosynthesis via de novo pathway; CTP from UDP: step 2/2. Allosterically activated by GTP, when glutamine is the substrate; GTP has no effect on the reaction when ammonia is the substrate. The allosteric effector GTP functions by stabilizing the protein conformation that binds the tetrahedral intermediate(s) formed during glutamine hydrolysis. Inhibited by the product CTP, via allosteric rather than competitive inhibition. In terms of biological role, catalyzes the ATP-dependent amination of UTP to CTP with either L-glutamine or ammonia as the source of nitrogen. Regulates intracellular CTP levels through interactions with the four ribonucleotide triphosphates. This Chromohalobacter salexigens (strain ATCC BAA-138 / DSM 3043 / CIP 106854 / NCIMB 13768 / 1H11) protein is CTP synthase.